Consider the following 285-residue polypeptide: Small ribosomal subunit protein uS2 (285 aa).

A disordered region spans residues 231-285 (GGKSGQAAAEPMAEWERELLEQHNAQQAEQAEAPAAEAPAEPAEAPAAEAAPQGE). Positions 255–285 (AQQAEQAEAPAAEAPAEPAEAPAAEAAPQGE) are enriched in low complexity.

Belongs to the universal ribosomal protein uS2 family.

This chain is Small ribosomal subunit protein uS2, found in Micrococcus luteus (strain ATCC 4698 / DSM 20030 / JCM 1464 / CCM 169 / CCUG 5858 / IAM 1056 / NBRC 3333 / NCIMB 9278 / NCTC 2665 / VKM Ac-2230) (Micrococcus lysodeikticus).